An 81-amino-acid polypeptide reads, in one-letter code: MRLVVCLVFLASFALVCQGQVYKGGYTRPVPRPPFVRPLPGGPIGPYNGCPVSCRGISFSQARSCCSRLGRCCHVGKGYSG.

A signal peptide spans 1-19 (MRLVVCLVFLASFALVCQG). The residue at position 20 (glutamine 20) is a Pyrrolidone carboxylic acid. Intrachain disulfides connect cysteine 50–cysteine 65, cysteine 54–cysteine 72, and cysteine 66–cysteine 73. Serine 80 carries the post-translational modification Serine amide.

It belongs to the penaeidin family.

The protein localises to the cytoplasmic granule. Antibacterial and antifungal activity. Presents chitin-binding activity. The chain is Penaeidin-3j from Penaeus vannamei (Whiteleg shrimp).